The chain runs to 340 residues: tRNA (cytosine(34)-C(5))-methyltransferase, mitochondrial (340 aa).

Residues 139–145, Glu162, Asp193, and Asp211 each bind S-adenosyl-L-methionine; that span reads CAAPGGK. Cys265 functions as the Nucleophile in the catalytic mechanism.

This sequence belongs to the class I-like SAM-binding methyltransferase superfamily. RsmB/NOP family.

The protein localises to the mitochondrion matrix. The catalysed reaction is cytidine(34) in mitochondrial tRNA + S-adenosyl-L-methionine = 5-methylcytidine(34) in mitochondrial tRNA + S-adenosyl-L-homocysteine + H(+). In terms of biological role, mitochondrial tRNA methyltransferase that mediates methylation of cytosine to 5-methylcytosine (m5C) at position 34 of mt-tRNA(Met). mt-tRNA(Met) methylation at cytosine(34) takes place at the wobble position of the anticodon and initiates the formation of 5-formylcytosine (f(5)c) at this position. mt-tRNA(Met) containing the f(5)c modification at the wobble position enables recognition of the AUA codon in addition to the AUG codon, expanding codon recognition in mitochondrial translation. This chain is tRNA (cytosine(34)-C(5))-methyltransferase, mitochondrial, found in Homo sapiens (Human).